The following is a 346-amino-acid chain: Peripherin-2 (346 aa).

Topologically, residues 1–24 are cytoplasmic; it reads MALLKVKFDQKKRVKLAQGLWLMN. The helical transmembrane segment at 25 to 43 threads the bilayer; the sequence is WLSVLAGIVLFSLGLFLKI. Residues 44-61 lie on the Lumenal side of the membrane; the sequence is ELRKRSEVMNNSESHFVP. N-linked (GlcNAc...) asparagine glycosylation occurs at N53. The chain crosses the membrane as a helical span at residues 62-80; it reads NSLIGVGVLSCVFNSLAGK. The Cytoplasmic segment spans residues 81 to 99; the sequence is ICYDALDPAKYAKWKPWLK. Residues 100–123 form a helical membrane-spanning segment; sequence PYLAVCIFFNVILFLVALCCFLLR. Topologically, residues 124–264 are lumenal; that stretch reads GSLESTLAYG…LNYYSSLMNS (141 aa). N-linked (GlcNAc...) asparagine glycosylation occurs at N229. Residues 265–290 traverse the membrane as a helical segment; the sequence is MGVVTLLVWLFEVSITAGLRYLHTAL. Residues 291-346 are Cytoplasmic-facing; it reads ESVSNPEDPECESEGWLLEKSVPETWKAFLESFKKLGKSNQVEAEGADAGPAPEAG. The segment at 341-346 is interaction with MREG; it reads PAPEAG.

The protein belongs to the PRPH2/ROM1 family. In terms of assembly, homodimer; disulfide-linked. Forms a homotetramer. Forms a heterotetramer with ROM1. Homotetramer and heterotetramer core complexes go on to form higher order complexes by formation of intermolecular disulfide bonds. Interacts with MREG. Interacts with STX3 isoform 3B. Interacts with SNAP25. As to expression, expressed in the retina (at protein level).

Its subcellular location is the membrane. It is found in the cell projection. The protein localises to the cilium. The protein resides in the photoreceptor outer segment. It localises to the photoreceptor inner segment. Essential for retina photoreceptor outer segment disk morphogenesis, may also play a role with ROM1 in the maintenance of outer segment disk structure. Required for the maintenance of retinal outer nuclear layer thickness. Required for the correct development and organization of the photoreceptor inner segment. The polypeptide is Peripherin-2 (Prph2) (Mus musculus (Mouse)).